A 542-amino-acid polypeptide reads, in one-letter code: CTP synthase (542 aa).

Residues 1–265 (MARYVFITGG…DSEVLSAFGI (265 aa)) are amidoligase domain. Ser13 contacts CTP. A UTP-binding site is contributed by Ser13. 14-19 (SLGKGI) is an ATP binding site. Residue Tyr54 participates in L-glutamine binding. Asp71 provides a ligand contact to ATP. Mg(2+) contacts are provided by Asp71 and Glu139. Residues 146-148 (DIE), 186-191 (KTKPTQ), and Lys222 each bind CTP. Residues 186–191 (KTKPTQ) and Lys222 contribute to the UTP site. The Glutamine amidotransferase type-1 domain occupies 291-541 (TIAVVGKYTG…IEAAIEQSRL (251 aa)). An L-glutamine-binding site is contributed by Gly353. Residue Cys380 is the Nucleophile; for glutamine hydrolysis of the active site. L-glutamine is bound by residues 381-384 (FGMQ), Glu404, and Arg469. Catalysis depends on residues His514 and Glu516.

Belongs to the CTP synthase family. In terms of assembly, homotetramer.

The enzyme catalyses UTP + L-glutamine + ATP + H2O = CTP + L-glutamate + ADP + phosphate + 2 H(+). The catalysed reaction is L-glutamine + H2O = L-glutamate + NH4(+). It carries out the reaction UTP + NH4(+) + ATP = CTP + ADP + phosphate + 2 H(+). The protein operates within pyrimidine metabolism; CTP biosynthesis via de novo pathway; CTP from UDP: step 2/2. Allosterically activated by GTP, when glutamine is the substrate; GTP has no effect on the reaction when ammonia is the substrate. The allosteric effector GTP functions by stabilizing the protein conformation that binds the tetrahedral intermediate(s) formed during glutamine hydrolysis. Inhibited by the product CTP, via allosteric rather than competitive inhibition. Its function is as follows. Catalyzes the ATP-dependent amination of UTP to CTP with either L-glutamine or ammonia as the source of nitrogen. Regulates intracellular CTP levels through interactions with the four ribonucleotide triphosphates. The polypeptide is CTP synthase (Brucella canis (strain ATCC 23365 / NCTC 10854 / RM-666)).